The chain runs to 312 residues: MLSTMAPGSTVGTLVANMTSVNATEDACTKSYSAFLSGMTSLLLVLLILLTLAGILFIIFVRKLVHRMDVWLIALLIELLLWVLGKMIQEFSSTGLCLLTQNMMFLGLMCSVWTHLGMALEKTLALFSRTPKRTSHRNVCLYLMGVFCLVLLLIIILLITMGPDANLNRGPNMCREGPTKGMHTAVQGLKAGCYLLAAVLIVLLTVIIIWKLLRTKFGRKPRLICNVTFTGLICAFSWFMLSLPLLFLGEAGSLGFDCTESLVARYYPGPAACLALLLIILYAWSFSHFMDSLKNQVTVTARYFRRVPSQST.

The Extracellular portion of the chain corresponds to 1–40; sequence MLSTMAPGSTVGTLVANMTSVNATEDACTKSYSAFLSGMT. 2 disulfide bridges follow: C28/C258 and C97/C174. Residues 41–61 traverse the membrane as a helical segment; it reads SLLLVLLILLTLAGILFIIFV. Residues 62–67 lie on the Cytoplasmic side of the membrane; it reads RKLVHR. The helical transmembrane segment at 68 to 88 threads the bilayer; the sequence is MDVWLIALLIELLLWVLGKMI. Topologically, residues 89-95 are extracellular; that stretch reads QEFSSTG. A helical transmembrane segment spans residues 96-116; that stretch reads LCLLTQNMMFLGLMCSVWTHL. Topologically, residues 117–138 are cytoplasmic; that stretch reads GMALEKTLALFSRTPKRTSHRN. The helical transmembrane segment at 139-159 threads the bilayer; it reads VCLYLMGVFCLVLLLIIILLI. Topologically, residues 160–192 are extracellular; the sequence is TMGPDANLNRGPNMCREGPTKGMHTAVQGLKAG. The chain crosses the membrane as a helical span at residues 193 to 213; sequence CYLLAAVLIVLLTVIIIWKLL. Residues 214–228 are Cytoplasmic-facing; it reads RTKFGRKPRLICNVT. A helical transmembrane segment spans residues 229–249; that stretch reads FTGLICAFSWFMLSLPLLFLG. Topologically, residues 250–269 are extracellular; that stretch reads EAGSLGFDCTESLVARYYPG. The chain crosses the membrane as a helical span at residues 270–290; sequence PAACLALLLIILYAWSFSHFM. Residues 291–312 lie on the Cytoplasmic side of the membrane; the sequence is DSLKNQVTVTARYFRRVPSQST.

Belongs to the Epstein-Barr virus BILF1 protein family. Interacts with host CXCR4 to form higher-order heterooligomers. Interacts with host Gi heterotrimer.

Its subcellular location is the host cell membrane. It is found in the host mitochondrion outer membrane. Its function is as follows. Constitutively active, ligand-independent G protein-coupled receptor that has immunoevasive and oncogenic activities. Couples with the host inhibitory G protein (Gi) in order to disrupt the host chemokine signaling. As a consequence of its constitutive activity, mediates host CXCR4 inhibition. Enhances degradation of host major histocompatibility complex class I antigens via lysosomes, thereby modulating the antigen presentation to cytotoxic T cells. Targets selectively HLA-A, HLA-Band HLA-E molecules. Targets also newly synthesized MHC-I/peptide complexes en route to the host cell surface. Inhibits the host EIF2AK2/PKR phosphorylation. Displays tranforming activity. Utilizes its C-terminal tail to trigger host MAVS UFMylation via PARK2, resulting in selective MAVS removal from mitochondrial membranes and routing to lysosomes to prevent viral activation of the NLRP3 inflammasome. In Homo sapiens (Human), this protein is G-protein coupled receptor BILF1.